Here is a 475-residue protein sequence, read N- to C-terminus: Pyruvate kinase (475 aa).

Substrate is bound at residue Arg-33. Residues Asn-35, Ser-37, and Asp-67 each coordinate K(+). An ATP-binding site is contributed by 35–38 (NFSH). The ATP site is built by Arg-74 and Lys-155. Position 220 (Glu-220) interacts with Mg(2+). 3 residues coordinate substrate: Gly-243, Asp-244, and Thr-276. Asp-244 is a Mg(2+) binding site.

The protein belongs to the pyruvate kinase family. Homotetramer. Requires Mg(2+) as cofactor. K(+) is required as a cofactor.

It carries out the reaction pyruvate + ATP = phosphoenolpyruvate + ADP + H(+). It functions in the pathway carbohydrate degradation; glycolysis; pyruvate from D-glyceraldehyde 3-phosphate: step 5/5. In Corynebacterium glutamicum (strain ATCC 13032 / DSM 20300 / JCM 1318 / BCRC 11384 / CCUG 27702 / LMG 3730 / NBRC 12168 / NCIMB 10025 / NRRL B-2784 / 534), this protein is Pyruvate kinase (pyk).